A 144-amino-acid chain; its full sequence is Large ribosomal subunit protein uL15 (144 aa).

The interval 1-57 (MQLNDLRSAPGARREKHRPGRGIGSGLGKTGGRGHKGLTSRSGGKVAPGFEGGQQPL) is disordered. Gly residues predominate over residues 21 to 31 (RGIGSGLGKTG).

It belongs to the universal ribosomal protein uL15 family. In terms of assembly, part of the 50S ribosomal subunit.

Its function is as follows. Binds to the 23S rRNA. This is Large ribosomal subunit protein uL15 from Pseudomonas aeruginosa (strain LESB58).